We begin with the raw amino-acid sequence, 84 residues long: Putative membrane protein insertion efficiency factor (84 aa).

The protein belongs to the UPF0161 family.

It is found in the cell inner membrane. Functionally, could be involved in insertion of integral membrane proteins into the membrane. The protein is Putative membrane protein insertion efficiency factor of Shewanella loihica (strain ATCC BAA-1088 / PV-4).